The following is a 214-amino-acid chain: Urease accessory protein UreG (214 aa).

23–30 contacts GTP; that stretch reads GPVGSGKT.

Belongs to the SIMIBI class G3E GTPase family. UreG subfamily. As to quaternary structure, homodimer. UreD, UreF and UreG form a complex that acts as a GTP-hydrolysis-dependent molecular chaperone, activating the urease apoprotein by helping to assemble the nickel containing metallocenter of UreC. The UreE protein probably delivers the nickel.

The protein resides in the cytoplasm. Its function is as follows. Facilitates the functional incorporation of the urease nickel metallocenter. This process requires GTP hydrolysis, probably effectuated by UreG. This is Urease accessory protein UreG from Bordetella pertussis (strain Tohama I / ATCC BAA-589 / NCTC 13251).